A 535-amino-acid chain; its full sequence is Probable deoxycholate-binding periplasmic protein YgiS (535 aa).

An N-terminal signal peptide occupies residues 1 to 20 (MYTRNLLWLVSLVSAAPLYA).

The protein belongs to the bacterial solute-binding protein 5 family.

It localises to the periplasm. In terms of biological role, probably part of a deoxycholate transport system. Its expression in the presence of deoxycholate in a ygiS deletion mutant increases intracellular deoxycholate levels and decreases cell growth; higher expression in the presence of deoxycholate inhibits cell growth completely. Bile acid detergents such as deoxycholate are important for host defense against bacterial growth in the gall bladder and duodenum. In Escherichia coli (strain K12), this protein is Probable deoxycholate-binding periplasmic protein YgiS (ygiS).